Reading from the N-terminus, the 511-residue chain is ATP synthase subunit alpha, mitochondrial (511 aa).

ATP is bound at residue 171-178 (GDRQTGKT).

It belongs to the ATPase alpha/beta chains family. F-type ATPases have 2 components, CF(1) - the catalytic core - and CF(0) - the membrane proton channel. CF(1) has five subunits: alpha(3), beta(3), gamma(1), delta(1), epsilon(1). CF(0) has three main subunits: a, b and c.

It is found in the mitochondrion. Its subcellular location is the mitochondrion inner membrane. Its function is as follows. Mitochondrial membrane ATP synthase (F(1)F(0) ATP synthase or Complex V) produces ATP from ADP in the presence of a proton gradient across the membrane which is generated by electron transport complexes of the respiratory chain. F-type ATPases consist of two structural domains, F(1) - containing the extramembraneous catalytic core, and F(0) - containing the membrane proton channel, linked together by a central stalk and a peripheral stalk. During catalysis, ATP synthesis in the catalytic domain of F(1) is coupled via a rotary mechanism of the central stalk subunits to proton translocation. Subunits alpha and beta form the catalytic core in F(1). Rotation of the central stalk against the surrounding alpha(3)beta(3) subunits leads to hydrolysis of ATP in three separate catalytic sites on the beta subunits. Subunit alpha does not bear the catalytic high-affinity ATP-binding sites. The polypeptide is ATP synthase subunit alpha, mitochondrial (ATPA) (Oenothera biennis (German evening primrose)).